The primary structure comprises 425 residues: Sensor histidine kinase NarS (425 aa).

Transmembrane regions (helical) follow at residues 42-62 (IASV…VVGT), 71-91 (IVLI…AYSA), 107-127 (LEPF…QLLS), 130-150 (GIYP…DVST), 155-175 (VVLA…PVML), and 181-201 (PETI…LMVV). In terms of domain architecture, Histidine kinase spans 224–425 (QTMTASEVLQ…HVCVELPLKR (202 aa)). His-241 is modified (phosphohistidine; by autocatalysis).

Autophosphorylated on His-241.

It localises to the cell membrane. It carries out the reaction ATP + protein L-histidine = ADP + protein N-phospho-L-histidine.. In terms of biological role, member of the two-component regulatory system NarS/NarL involved in gene expression during aerobic nitrate metabolism. Plays therefore a crucial role in anaerobic survival of mycobacteria in host. Functions as a sensor protein kinase which is autophosphorylated at a histidine residue and transfers its phosphate group to the conserved aspartic acid residue in the regulatory domain of NarL. In turn, NarL binds to the upstream promoter regions of target genes to regulate their expression during aerobic nitrate metabolism. The chain is Sensor histidine kinase NarS from Mycobacterium tuberculosis (strain ATCC 25618 / H37Rv).